We begin with the raw amino-acid sequence, 464 residues long: Kynureninase 2 (464 aa).

Pyridoxal 5'-phosphate is bound by residues Leu-135, Thr-136, Phe-163–Asp-166, Asp-248, His-251, and Tyr-273. Residue Lys-274 is modified to N6-(pyridoxal phosphate)lysine. Pyridoxal 5'-phosphate contacts are provided by Trp-313 and Asn-341.

This sequence belongs to the kynureninase family. Homodimer. Requires pyridoxal 5'-phosphate as cofactor.

It is found in the cytoplasm. It catalyses the reaction L-kynurenine + H2O = anthranilate + L-alanine + H(+). It carries out the reaction 3-hydroxy-L-kynurenine + H2O = 3-hydroxyanthranilate + L-alanine + H(+). It functions in the pathway amino-acid degradation; L-kynurenine degradation; L-alanine and anthranilate from L-kynurenine: step 1/1. Its pathway is cofactor biosynthesis; NAD(+) biosynthesis; quinolinate from L-kynurenine: step 2/3. Its function is as follows. Catalyzes the cleavage of L-kynurenine (L-Kyn) and L-3-hydroxykynurenine (L-3OHKyn) into anthranilic acid (AA) and 3-hydroxyanthranilic acid (3-OHAA), respectively. In Aspergillus fumigatus (strain CBS 144.89 / FGSC A1163 / CEA10) (Neosartorya fumigata), this protein is Kynureninase 2 (bna5-2).